Here is a 23-residue protein sequence, read N- to C-terminus: Cysteine proteinase (23 aa).

Residues 1–10 (ADSLDWREKG) are compositionally biased toward basic and acidic residues. The interval 1–23 (ADSLDWREKGVVNSIKDQAQXGS) is disordered.

This sequence belongs to the peptidase C1 family.

The polypeptide is Cysteine proteinase (Tritrichomonas foetus (Trichomonas foetus)).